A 188-amino-acid chain; its full sequence is Elongation factor P (188 aa).

The protein belongs to the elongation factor P family.

Its subcellular location is the cytoplasm. The protein operates within protein biosynthesis; polypeptide chain elongation. Its function is as follows. Involved in peptide bond synthesis. Stimulates efficient translation and peptide-bond synthesis on native or reconstituted 70S ribosomes in vitro. Probably functions indirectly by altering the affinity of the ribosome for aminoacyl-tRNA, thus increasing their reactivity as acceptors for peptidyl transferase. This is Elongation factor P from Rickettsia africae (strain ESF-5).